A 140-amino-acid polypeptide reads, in one-letter code: Small ribosomal subunit protein uS12 (140 aa).

Disordered regions lie at residues 1-20 (MPTINQLVRKGRKSKVVKSD) and 35-55 (QTNVSSPQKRGVCTRVGTMTP). 3-methylthioaspartic acid is present on aspartate 102. Residues 121–140 (DGRMQGRSKYGTKRPKAAKK) are disordered. Basic residues predominate over residues 130–140 (YGTKRPKAAKK).

This sequence belongs to the universal ribosomal protein uS12 family. Part of the 30S ribosomal subunit. Contacts proteins S8 and S17. May interact with IF1 in the 30S initiation complex.

With S4 and S5 plays an important role in translational accuracy. In terms of biological role, interacts with and stabilizes bases of the 16S rRNA that are involved in tRNA selection in the A site and with the mRNA backbone. Located at the interface of the 30S and 50S subunits, it traverses the body of the 30S subunit contacting proteins on the other side and probably holding the rRNA structure together. The combined cluster of proteins S8, S12 and S17 appears to hold together the shoulder and platform of the 30S subunit. The sequence is that of Small ribosomal subunit protein uS12 from Exiguobacterium sp. (strain ATCC BAA-1283 / AT1b).